The primary structure comprises 182 residues: Prorelaxin (182 aa).

Positions 1-25 are cleaved as a signal peptide; the sequence is MRRLFLSHVLGAWLLLSQLPRELSG. Gln26 bears the Pyrrolidone carboxylic acid mark. 3 cysteine pairs are disulfide-bonded: Cys35-Cys169, Cys47-Cys182, and Cys168-Cys173. The propeptide at 54 to 156 is connecting peptide; it reads KTVLRLEEPG…LKNLGLDKHS (103 aa). A propeptide spanning residues 161 to 162 is cleaved from the precursor; that stretch reads MI. At Gln163 the chain carries Pyrrolidone carboxylic acid.

Belongs to the insulin family. As to quaternary structure, heterodimer of a B chain and an A chain linked by two disulfide bonds.

The protein localises to the secreted. Relaxin is an ovarian hormone that acts with estrogen to produce dilatation of the birth canal in many mammals. The sequence is that of Prorelaxin (RLN) from Equus caballus (Horse).